Reading from the N-terminus, the 205-residue chain is Adenylyl-sulfate kinase (205 aa).

Position 31 to 38 (31 to 38 (GLSGAGKS)) interacts with ATP. Ser105 functions as the Phosphoserine intermediate in the catalytic mechanism.

This sequence belongs to the APS kinase family.

It carries out the reaction adenosine 5'-phosphosulfate + ATP = 3'-phosphoadenylyl sulfate + ADP + H(+). Its pathway is sulfur metabolism; hydrogen sulfide biosynthesis; sulfite from sulfate: step 2/3. Catalyzes the synthesis of activated sulfate. The polypeptide is Adenylyl-sulfate kinase (Shewanella baltica (strain OS155 / ATCC BAA-1091)).